Here is a 178-residue protein sequence, read N- to C-terminus: Large ribosomal subunit protein uL5 (178 aa).

This sequence belongs to the universal ribosomal protein uL5 family. In terms of assembly, part of the 50S ribosomal subunit; contacts the 5S rRNA and probably tRNA. Forms a bridge to the 30S subunit in the 70S ribosome.

Its function is as follows. This is one of the proteins that bind and probably mediate the attachment of the 5S RNA into the large ribosomal subunit, where it forms part of the central protuberance. In the 70S ribosome it contacts protein S13 of the 30S subunit (bridge B1b), connecting the 2 subunits; this bridge is implicated in subunit movement. May contact the P site tRNA; the 5S rRNA and some of its associated proteins might help stabilize positioning of ribosome-bound tRNAs. In Sulfolobus acidocaldarius (strain ATCC 33909 / DSM 639 / JCM 8929 / NBRC 15157 / NCIMB 11770), this protein is Large ribosomal subunit protein uL5.